The chain runs to 116 residues: Large ribosomal subunit protein bL20 (116 aa).

Belongs to the bacterial ribosomal protein bL20 family.

Functionally, binds directly to 23S ribosomal RNA and is necessary for the in vitro assembly process of the 50S ribosomal subunit. It is not involved in the protein synthesizing functions of that subunit. The chain is Large ribosomal subunit protein bL20 (rplT) from Mycoplasmopsis fermentans (Mycoplasma fermentans).